The chain runs to 238 residues: Uridylate kinase (238 aa).

12–15 is a binding site for ATP; it reads KVSG. Gly-54 lines the UMP pocket. Positions 55 and 59 each coordinate ATP. Residues Asp-74 and 135 to 142 each bind UMP; that span reads TGNPYFTT. Residues Thr-162, Asn-163, Tyr-168, and Asp-171 each contribute to the ATP site.

It belongs to the UMP kinase family. Homohexamer.

The protein localises to the cytoplasm. The enzyme catalyses UMP + ATP = UDP + ADP. The protein operates within pyrimidine metabolism; CTP biosynthesis via de novo pathway; UDP from UMP (UMPK route): step 1/1. With respect to regulation, inhibited by UTP. Its function is as follows. Catalyzes the reversible phosphorylation of UMP to UDP. In Azorhizobium caulinodans (strain ATCC 43989 / DSM 5975 / JCM 20966 / LMG 6465 / NBRC 14845 / NCIMB 13405 / ORS 571), this protein is Uridylate kinase.